The primary structure comprises 884 residues: Exocyst complex component 2 (884 aa).

A compositionally biased stretch (basic and acidic residues) spans 1-11 (MEENAQARERL). The disordered stretch occupies residues 1–27 (MEENAQARERLPPTVTGLSPTEGVPGT). The IPT/TIG domain maps to 13-98 (PTVTGLSPTE…GSSNVKFRVF (86 aa)). 2 coiled-coil regions span residues 178-206 (ADAT…SEEM) and 846-874 (NQRL…AENL).

Belongs to the SEC5 family. As to quaternary structure, the exocyst complex is composed of sec-3/exoc1, sec-5/exoc2, sec-6/exoc3, sec-8/exoc4, sec-10/exoc5, sec-15/exoc6, exo-70/exoc7 and exo-84/exoc8.

Functionally, component of the exocyst complex involved in the docking of exocytic vesicles with fusion sites on the plasma membrane. This Caenorhabditis elegans protein is Exocyst complex component 2 (sec-5).